The sequence spans 332 residues: Alpha/beta hydrolase domain-containing protein aho-3 (332 aa).

Positions 1 to 15 (MSSGAPSGSSMSSTP) are enriched in low complexity. A disordered region spans residues 1–24 (MSSGAPSGSSMSSTPGSPPPRAGG). Active-site charge relay system residues include Ser191, Asp256, and His285.

Belongs to the AB hydrolase superfamily. ABHD17 family. Post-translationally, palmitoylated on cysteine residues located in a cysteine cluster at the N-terminus which promotes membrane localization and localization to sensory neuron endings. In terms of tissue distribution, expressed in a subset of neurons including AIY, HSN, ADF, AFD, AWC, AWB and NSM, hypodermis, pharyngeal muscle and intestine.

The protein resides in the cell membrane. The protein localises to the cytoplasmic vesicle membrane. It catalyses the reaction S-hexadecanoyl-L-cysteinyl-[protein] + H2O = L-cysteinyl-[protein] + hexadecanoate + H(+). Its function is as follows. Hydrolyzes fatty acids from S-acylated cysteine residues in proteins. Acts in sensory neurons including AWC to regulate starvation-induced thermotaxis plasticity and salt learning behavior. The chain is Alpha/beta hydrolase domain-containing protein aho-3 from Caenorhabditis elegans.